A 339-amino-acid polypeptide reads, in one-letter code: Undecaprenyl-phosphate 4-deoxy-4-formamido-L-arabinose transferase (339 aa).

Transmembrane regions (helical) follow at residues 235 to 255 (LSII…MLIV) and 270 to 290 (FVLF…MGLL).

The protein belongs to the glycosyltransferase 2 family.

Its subcellular location is the cell inner membrane. The enzyme catalyses UDP-4-deoxy-4-formamido-beta-L-arabinose + di-trans,octa-cis-undecaprenyl phosphate = 4-deoxy-4-formamido-alpha-L-arabinopyranosyl di-trans,octa-cis-undecaprenyl phosphate + UDP. It functions in the pathway glycolipid biosynthesis; 4-amino-4-deoxy-alpha-L-arabinose undecaprenyl phosphate biosynthesis; 4-amino-4-deoxy-alpha-L-arabinose undecaprenyl phosphate from UDP-4-deoxy-4-formamido-beta-L-arabinose and undecaprenyl phosphate: step 1/2. The protein operates within bacterial outer membrane biogenesis; lipopolysaccharide biosynthesis. Its function is as follows. Catalyzes the transfer of 4-deoxy-4-formamido-L-arabinose from UDP to undecaprenyl phosphate. The modified arabinose is attached to lipid A and is required for resistance to polymyxin and cationic antimicrobial peptides. This is Undecaprenyl-phosphate 4-deoxy-4-formamido-L-arabinose transferase from Pseudomonas fluorescens (strain ATCC BAA-477 / NRRL B-23932 / Pf-5).